The primary structure comprises 417 residues: Arginine biosynthesis bifunctional protein ArgJ (417 aa).

Substrate is bound by residues threonine 162, lysine 188, threonine 199, glutamate 289, asparagine 412, and serine 417. The Nucleophile role is filled by threonine 199.

It belongs to the ArgJ family. In terms of assembly, heterotetramer of two alpha and two beta chains.

The protein resides in the cytoplasm. The enzyme catalyses N(2)-acetyl-L-ornithine + L-glutamate = N-acetyl-L-glutamate + L-ornithine. The catalysed reaction is L-glutamate + acetyl-CoA = N-acetyl-L-glutamate + CoA + H(+). It participates in amino-acid biosynthesis; L-arginine biosynthesis; L-ornithine and N-acetyl-L-glutamate from L-glutamate and N(2)-acetyl-L-ornithine (cyclic): step 1/1. Its pathway is amino-acid biosynthesis; L-arginine biosynthesis; N(2)-acetyl-L-ornithine from L-glutamate: step 1/4. In terms of biological role, catalyzes two activities which are involved in the cyclic version of arginine biosynthesis: the synthesis of N-acetylglutamate from glutamate and acetyl-CoA as the acetyl donor, and of ornithine by transacetylation between N(2)-acetylornithine and glutamate. This is Arginine biosynthesis bifunctional protein ArgJ from Nitrobacter winogradskyi (strain ATCC 25391 / DSM 10237 / CIP 104748 / NCIMB 11846 / Nb-255).